We begin with the raw amino-acid sequence, 352 residues long: UPF0324 membrane protein BCE_5279 (352 aa).

Helical transmembrane passes span 25 to 47, 52 to 71, 111 to 130, 140 to 162, 169 to 191, 201 to 223, 230 to 252, 267 to 289, 291 to 313, and 328 to 350; these read FGFSQGIGITLLIAIVAKYLAEL, IMGQLVIAILIGMVWRAAIG, VLVIAAVVITFTIFVVYGLT, GILTACGTAICGAAAVVAIAPQV, TAVGAAIIAILGTIFTLIYTLLY, YGVFSGATLHEIAHVIAAAAPGG, AVIVKLTRVAMLVPVAILIGLWF, LPIPWFIFGFLAMSAVHSLGIIP, VVAGYIVVIAYMLIAMAMAGLGL, and FVAGLIGSVCLSVLGYVLVYALG.

It belongs to the UPF0324 family.

It localises to the cell membrane. This chain is UPF0324 membrane protein BCE_5279, found in Bacillus cereus (strain ATCC 10987 / NRS 248).